A 371-amino-acid chain; its full sequence is Peptide chain release factor 2 (371 aa).

Glutamine 250 is modified (N5-methylglutamine).

Belongs to the prokaryotic/mitochondrial release factor family. Methylated by PrmC. Methylation increases the termination efficiency of RF2.

The protein localises to the cytoplasm. Functionally, peptide chain release factor 2 directs the termination of translation in response to the peptide chain termination codons UGA and UAA. This Paramagnetospirillum magneticum (strain ATCC 700264 / AMB-1) (Magnetospirillum magneticum) protein is Peptide chain release factor 2.